We begin with the raw amino-acid sequence, 421 residues long: Glutamate-1-semialdehyde 2,1-aminomutase 1 (421 aa).

At Lys258 the chain carries N6-(pyridoxal phosphate)lysine.

The protein belongs to the class-III pyridoxal-phosphate-dependent aminotransferase family. HemL subfamily. Pyridoxal 5'-phosphate is required as a cofactor.

The protein localises to the cytoplasm. It carries out the reaction (S)-4-amino-5-oxopentanoate = 5-aminolevulinate. It functions in the pathway porphyrin-containing compound metabolism; protoporphyrin-IX biosynthesis; 5-aminolevulinate from L-glutamyl-tRNA(Glu): step 2/2. This chain is Glutamate-1-semialdehyde 2,1-aminomutase 1, found in Cenarchaeum symbiosum (strain A).